Consider the following 86-residue polypeptide: Toxin TdNa7 (86 aa).

The signal sequence occupies residues 1–20 (MTRFVLFLSCFFLIGMVVEC). An LCN-type CS-alpha/beta domain is found at 21–83 (KDGYLMGPDG…TWERATNTCG (63 aa)). 4 disulfide bridges follow: Cys-31–Cys-82, Cys-35–Cys-57, Cys-43–Cys-63, and Cys-47–Cys-65. Lys-84 is modified (lysine amide).

This sequence belongs to the long (4 C-C) scorpion toxin superfamily. Sodium channel inhibitor family. Beta subfamily. As to expression, expressed by the venom gland.

It is found in the secreted. Functionally, beta toxins bind voltage-independently at site-4 of sodium channels (Nav) and shift the voltage of activation toward more negative potentials thereby affecting sodium channel activation and promoting spontaneous and repetitive firing. The chain is Toxin TdNa7 from Tityus discrepans (Venezuelan scorpion).